A 350-amino-acid chain; its full sequence is Secreted effector protein PipB2 (350 aa).

4 consecutive Pentapeptide repeat domains span residues 162–201, 202–241, 247–286, and 287–326; these read ANLT…NLSG, TSLG…SLLG, CNCS…IMED, and AVLT…TLTH.

Interacts with the host kinesin light chain (KLC), a subunit of the kinesin-1 motor complex.

It is found in the secreted. Its subcellular location is the host membrane. Functionally, effector proteins function to alter host cell physiology and promote bacterial survival in host tissues. Involved in the reorganization of late endosome/lysosome (LE/Lys) compartments in mammalian cells. Necessary and sufficient to link kinesin-1 onto the Salmonella-containing vacuole (SCV) membrane. Required for centrifugal extension of lysosomal glycoprotein-rich membrane tubules, known as Salmonella-induced filaments (Sifs), away from the SCV and toward the cell periphery. Required for virulence, but not for intracellular survival and replication in phagocytic cells. The chain is Secreted effector protein PipB2 (pipB2) from Salmonella paratyphi A (strain ATCC 9150 / SARB42).